Here is a 311-residue protein sequence, read N- to C-terminus: Cytosolic Fe-S cluster assembly factor Nubp1 homolog (311 aa).

Residues 1–21 (MQAPPPEHCPGVESEDAGKGS) are disordered. Cys-9, Cys-23, Cys-26, and Cys-32 together coordinate [4Fe-4S] cluster. 63–70 (GKGGVGKS) is a binding site for ATP. Residues Cys-240 and Cys-243 each coordinate [4Fe-4S] cluster.

It belongs to the Mrp/NBP35 ATP-binding proteins family. NUBP1/NBP35 subfamily. Heterotetramer of 2 Nubp1 and 2 Nubp2 chains. [4Fe-4S] cluster serves as cofactor.

The protein resides in the cytoplasm. In terms of biological role, component of the cytosolic iron-sulfur (Fe/S) protein assembly (CIA) machinery. Required for maturation of extramitochondrial Fe-S proteins. The Nubp1-Nubp2 heterotetramer forms a Fe-S scaffold complex, mediating the de novo assembly of an Fe-S cluster and its transfer to target apoproteins. The polypeptide is Cytosolic Fe-S cluster assembly factor Nubp1 homolog (Drosophila sechellia (Fruit fly)).